Reading from the N-terminus, the 667-residue chain is UvrABC system protein B (667 aa).

Residues 28 to 185 (NNFKQGLKEQ…NKLIELKYQR (158 aa)) enclose the Helicase ATP-binding domain. 41 to 48 (GATGTGKT) lines the ATP pocket. The short motif at 94-117 (YYDYYQPEAYVASSDTYIEKDSKI) is the Beta-hairpin element. The Helicase C-terminal domain occupies 432–594 (QMDDLYFEIK…VTPTALNKTI (163 aa)). The region spanning 629-664 (NKEIKRLQKTMKEAAKALDFEKAATLRDLILDLEKK) is the UVR domain.

It belongs to the UvrB family. Forms a heterotetramer with UvrA during the search for lesions. Interacts with UvrC in an incision complex.

Its subcellular location is the cytoplasm. Its function is as follows. The UvrABC repair system catalyzes the recognition and processing of DNA lesions. A damage recognition complex composed of 2 UvrA and 2 UvrB subunits scans DNA for abnormalities. Upon binding of the UvrA(2)B(2) complex to a putative damaged site, the DNA wraps around one UvrB monomer. DNA wrap is dependent on ATP binding by UvrB and probably causes local melting of the DNA helix, facilitating insertion of UvrB beta-hairpin between the DNA strands. Then UvrB probes one DNA strand for the presence of a lesion. If a lesion is found the UvrA subunits dissociate and the UvrB-DNA preincision complex is formed. This complex is subsequently bound by UvrC and the second UvrB is released. If no lesion is found, the DNA wraps around the other UvrB subunit that will check the other stand for damage. The chain is UvrABC system protein B from Aster yellows witches'-broom phytoplasma (strain AYWB).